Here is a 142-residue protein sequence, read N- to C-terminus: Large ribosomal subunit protein uL11 (142 aa).

It belongs to the universal ribosomal protein uL11 family. As to quaternary structure, part of the ribosomal stalk of the 50S ribosomal subunit. Interacts with L10 and the large rRNA to form the base of the stalk. L10 forms an elongated spine to which L12 dimers bind in a sequential fashion forming a multimeric L10(L12)X complex. In terms of processing, one or more lysine residues are methylated.

Functionally, forms part of the ribosomal stalk which helps the ribosome interact with GTP-bound translation factors. This is Large ribosomal subunit protein uL11 from Aeromonas hydrophila subsp. hydrophila (strain ATCC 7966 / DSM 30187 / BCRC 13018 / CCUG 14551 / JCM 1027 / KCTC 2358 / NCIMB 9240 / NCTC 8049).